The primary structure comprises 421 residues: Protein HOMOLOG OF MAMMALIAN LYST-INTERACTING PROTEIN 5 (421 aa).

Ser2 carries the post-translational modification N-acetylserine. The tract at residues 146–374 is disordered; that stretch reads IKEGRKPTPG…KYHYDSSYQP (229 aa). Residues 165-185 show a composition bias toward polar residues; sequence SIPSSGPSGSYDHSASDTNTT. Basic and acidic residues predominate over residues 188–207; it reads HRTELDPPHDSNDDSSHHQF. A compositionally biased stretch (pro residues) spans 245–258; it reads LPPPTGPSDSPYPH. Over residues 278–293 the composition is skewed to polar residues; it reads NYSSHEPSPNSLPNFQ. Low complexity-rich tracts occupy residues 294–308 and 317–337; these read SYPS…STSP and PEPY…SFSS.

The protein belongs to the VTA1 family. Homodimer. Interacts with SKD1/VPS4, VPS60-1, CHMP1A and CHMP1B. Binds to PROS/At4g24370. Interacts with MPK6 and MPK3. Post-translationally, phosphorylated by activated MPK6 and MPK3, this activation is required to trigger multivesicular bodies (MVBs) trafficking upon plant infection.

It localises to the cytoplasm. The protein resides in the endosome membrane. The protein localises to the nucleus. It is found in the endosome. Its subcellular location is the multivesicular body. Involved in the endosomal multivesicular bodies (MVB) pathway. MVBs contain intraluminal vesicles (ILVs) that are generated by invagination and scission from the limiting membrane of the endosome and are delivered to lysosomes enabling degradation of membrane proteins. Thought to be a cofactor of SKD1/VPS4, which catalyzes the disassembly of membrane-associated ESCRT-III. Target of pathogen-responsive mitogen-activated protein kinases (MPKs) that plays a critical role in plant basal resistance to Pseudomonas syringae in a SKD1-dependent manner by promoting multivesicular bodies (MVBs) trafficking upon plant infection. The polypeptide is Protein HOMOLOG OF MAMMALIAN LYST-INTERACTING PROTEIN 5 (Arabidopsis thaliana (Mouse-ear cress)).